A 154-amino-acid chain; its full sequence is Putative nuclear shuttle protein (154 aa).

Belongs to the nanoviridae nuclear shuttle protein family.

It is found in the host nucleus. The protein localises to the host cytoplasm. Putative nuclear shuttle protein. This is Putative nuclear shuttle protein (DNA-N) from Musa (BBTV).